The following is a 226-amino-acid chain: ATP synthase F(0) complex subunit a (226 aa).

Transmembrane regions (helical) follow at residues 6–26, 68–88, 97–117, 138–158, 164–184, and 200–222; these read FASF…IVLF, WTLM…LGLL, QLSM…ITGF, IPML…ALAV, ITAG…LMSI, and TILE…SLYL.

Belongs to the ATPase A chain family. Component of the ATP synthase complex composed at least of ATP5F1A/subunit alpha, ATP5F1B/subunit beta, ATP5MC1/subunit c (homooctomer), MT-ATP6/subunit a, MT-ATP8/subunit 8, ATP5ME/subunit e, ATP5MF/subunit f, ATP5MG/subunit g, ATP5MK/subunit k, ATP5MJ/subunit j, ATP5F1C/subunit gamma, ATP5F1D/subunit delta, ATP5F1E/subunit epsilon, ATP5PF/subunit F6, ATP5PB/subunit b, ATP5PD/subunit d, ATP5PO/subunit OSCP. ATP synthase complex consists of a soluble F(1) head domain (subunits alpha(3) and beta(3)) - the catalytic core - and a membrane F(0) domain - the membrane proton channel (subunits c, a, 8, e, f, g, k and j). These two domains are linked by a central stalk (subunits gamma, delta, and epsilon) rotating inside the F1 region and a stationary peripheral stalk (subunits F6, b, d, and OSCP). Interacts with DNAJC30; interaction is direct.

It is found in the mitochondrion inner membrane. It catalyses the reaction H(+)(in) = H(+)(out). Functionally, subunit a, of the mitochondrial membrane ATP synthase complex (F(1)F(0) ATP synthase or Complex V) that produces ATP from ADP in the presence of a proton gradient across the membrane which is generated by electron transport complexes of the respiratory chain. ATP synthase complex consist of a soluble F(1) head domain - the catalytic core - and a membrane F(1) domain - the membrane proton channel. These two domains are linked by a central stalk rotating inside the F(1) region and a stationary peripheral stalk. During catalysis, ATP synthesis in the catalytic domain of F(1) is coupled via a rotary mechanism of the central stalk subunits to proton translocation. With the subunit c (ATP5MC1), forms the proton-conducting channel in the F(0) domain, that contains two crucial half-channels (inlet and outlet) that facilitate proton movement from the mitochondrial intermembrane space (IMS) into the matrix. Protons are taken up via the inlet half-channel and released through the outlet half-channel, following a Grotthuss mechanism. This Bos mutus grunniens (Wild yak) protein is ATP synthase F(0) complex subunit a.